Consider the following 429-residue polypeptide: Histidine--tRNA ligase (429 aa).

The protein belongs to the class-II aminoacyl-tRNA synthetase family. Homodimer.

The protein resides in the cytoplasm. The catalysed reaction is tRNA(His) + L-histidine + ATP = L-histidyl-tRNA(His) + AMP + diphosphate + H(+). The polypeptide is Histidine--tRNA ligase (Streptococcus pneumoniae (strain Hungary19A-6)).